A 428-amino-acid chain; its full sequence is Glutamate-1-semialdehyde 2,1-aminomutase 1 (428 aa).

Lysine 267 is modified (N6-(pyridoxal phosphate)lysine).

Belongs to the class-III pyridoxal-phosphate-dependent aminotransferase family. HemL subfamily. As to quaternary structure, homodimer. Pyridoxal 5'-phosphate is required as a cofactor.

The protein resides in the cytoplasm. The enzyme catalyses (S)-4-amino-5-oxopentanoate = 5-aminolevulinate. It participates in porphyrin-containing compound metabolism; protoporphyrin-IX biosynthesis; 5-aminolevulinate from L-glutamyl-tRNA(Glu): step 2/2. The protein is Glutamate-1-semialdehyde 2,1-aminomutase 1 of Staphylococcus aureus (strain MW2).